The sequence spans 427 residues: Glutamyl-tRNA reductase (427 aa).

Residues 49–52, Ser-109, 114–116, and Gln-120 each bind substrate; these read TCNR and EGQ. Catalysis depends on Cys-50, which acts as the Nucleophile. 188-193 provides a ligand contact to NADP(+); it reads GAGKMA.

This sequence belongs to the glutamyl-tRNA reductase family. Homodimer.

It catalyses the reaction (S)-4-amino-5-oxopentanoate + tRNA(Glu) + NADP(+) = L-glutamyl-tRNA(Glu) + NADPH + H(+). The protein operates within porphyrin-containing compound metabolism; protoporphyrin-IX biosynthesis; 5-aminolevulinate from L-glutamyl-tRNA(Glu): step 1/2. Its pathway is porphyrin-containing compound metabolism; chlorophyll biosynthesis. Feedback inhibition by heme. Functionally, catalyzes the NADPH-dependent reduction of glutamyl-tRNA(Glu) to glutamate 1-semialdehyde (GSA). The sequence is that of Glutamyl-tRNA reductase from Synechocystis sp. (strain ATCC 27184 / PCC 6803 / Kazusa).